The primary structure comprises 475 residues: ISWI one complex protein 4 (475 aa).

Phosphoserine is present on Ser2. Thr9 bears the Phosphothreonine mark. Disordered stretches follow at residues 42-84 (VSVH…DFGE), 181-296 (EEEY…IKYH), and 454-475 (EMDR…KVGA). Phosphoserine occurs at positions 65 and 73. Composition is skewed to acidic residues over residues 72–84 (QSEE…DFGE), 181–193 (EEEY…EENE), and 241–252 (ASEEEEEEEEEK). Ser242 is modified (phosphoserine). The segment covering 259–294 (KRPQRTKTKKVVVSKTKPNPKTKAKKEKPKPPKPIK) has biased composition (basic residues). Basic and acidic residues predominate over residues 456–475 (DREKPSFSEDVKEEESKVGA).

As to quaternary structure, component of the ISW1B complex, which at least consists of ISW1, IOC2 and IOC4.

The protein localises to the nucleus. Functions as a component of the ISW1B complex, which acts in remodeling the chromatin by catalyzing an ATP-dependent alteration in the structure of nucleosomal DNA. The ISW1B complex acts within coding regions to control the amount of RNA polymerase II released into productive elongation and to coordinate elongation with termination and pre-mRNA processing. This Saccharomyces cerevisiae (strain ATCC 204508 / S288c) (Baker's yeast) protein is ISWI one complex protein 4 (IOC4).